The sequence spans 134 residues: Large ribosomal subunit protein eL32 (134 aa).

Belongs to the eukaryotic ribosomal protein eL32 family.

The polypeptide is Large ribosomal subunit protein eL32 (RpL32) (Drosophila bifasciata (Fruit fly)).